A 192-amino-acid chain; its full sequence is HTH-type transcriptional repressor SCO4008 (192 aa).

The region spanning 7 to 67 (EATKARIFEA…SVLEKKMLDL (61 aa)) is the HTH tetR-type domain. The H-T-H motif DNA-binding region spans 30–49 (RIDRIAAEARANKQLIYAYY).

In terms of assembly, homodimer. Four dimers bind to the two operator sites.

Binding of a wide range of cationic hydrophobic compounds to SCO4008 causes a decrease in DNA-binding, probably via allosteric conformational change of SCO4008. Its function is as follows. Probably regulates the expression of its own gene and the adjacent SCO4007 gene by binding to two operator sites in the SCO4007-SCO4008 intergenic region. This chain is HTH-type transcriptional repressor SCO4008, found in Streptomyces coelicolor (strain ATCC BAA-471 / A3(2) / M145).